A 382-amino-acid chain; its full sequence is Fimbrial usher domain-containing protein YdeT (382 aa).

The protein is Fimbrial usher domain-containing protein YdeT (ydeT) of Escherichia coli (strain K12).